The following is a 276-amino-acid chain: Flagellin FljJ (276 aa).

The disordered stretch occupies residues 51–80; sequence RPGAGDMSGLAREDEPGSGDIDRGRGPRAG. The segment covering 61 to 75 has biased composition (basic and acidic residues); it reads AREDEPGSGDIDRGR.

This sequence belongs to the bacterial flagellin family. As to quaternary structure, in C.crescentus, the flagellar filament is composed of multiple flagellins of 29 kDa; 27 kDa and 25 kDa.

The protein localises to the secreted. Its subcellular location is the bacterial flagellum. In terms of biological role, flagellin is the subunit protein which polymerizes to form the filaments of bacterial flagella. The chain is Flagellin FljJ (fljJ) from Caulobacter vibrioides (strain ATCC 19089 / CIP 103742 / CB 15) (Caulobacter crescentus).